Here is a 129-residue protein sequence, read N- to C-terminus: UPF0344 protein SAB0838 (129 aa).

4 consecutive transmembrane segments (helical) span residues 1–21 (MLHL…ATYL), 36–56 (LHMV…WILI), 67–87 (MLLT…EVSI), and 99–119 (MFWI…ILPL).

This sequence belongs to the UPF0344 family.

The protein resides in the cell membrane. This chain is UPF0344 protein SAB0838, found in Staphylococcus aureus (strain bovine RF122 / ET3-1).